A 162-amino-acid polypeptide reads, in one-letter code: Large ribosomal subunit protein uL15 (162 aa).

Residues 1–10 (MNLNELRDNA) are compositionally biased toward basic and acidic residues. Residues 1 to 39 (MNLNELRDNAGSRYRKKRLGRGIGSGKGKTSGKGVKGQK) form a disordered region. Positions 21–35 (RGIGSGKGKTSGKGV) are enriched in gly residues.

This sequence belongs to the universal ribosomal protein uL15 family. Part of the 50S ribosomal subunit.

Binds to the 23S rRNA. The chain is Large ribosomal subunit protein uL15 from Gluconacetobacter diazotrophicus (strain ATCC 49037 / DSM 5601 / CCUG 37298 / CIP 103539 / LMG 7603 / PAl5).